The chain runs to 857 residues: Mitogen-activated protein kinase kinase kinase dlk-1 (857 aa).

The region spanning 62 to 304 (ISNLEWLGSG…FSHIRQHWEI (243 aa)) is the Protein kinase domain. ATP contacts are provided by residues 68-76 (LGSGSQGAV) and Lys-89. Asp-173 acts as the Proton acceptor in catalysis. Disordered stretches follow at residues 441 to 503 (EEMS…ISRN), 572 to 625 (RIAS…PSRN), 733 to 775 (NAND…MESE), and 818 to 857 (HSIKTHRRTSSNPQAIIHQRIEEYSSSATEDSDDAGAVRI). Residues 467–488 (SSGAQSSPFSRQSSCRSSAGQQ) are compositionally biased toward low complexity. Residues 609 to 623 (APRSSSKLNRSSYPS) are compositionally biased toward polar residues. The segment covering 753–762 (ADVESSEDEG) has biased composition (acidic residues). Residues 763–772 (NGNNILNTSM) are compositionally biased toward polar residues.

Belongs to the protein kinase superfamily. STE Ser/Thr protein kinase family. MAP kinase kinase kinase subfamily. The cofactor is Mg(2+). In terms of processing, ubiquitinated by rpm-1. Negatively regulated by ubiquitination by fsn-1 bound rpm-1, followed by degradation.

It localises to the synapse. The catalysed reaction is L-seryl-[protein] + ATP = O-phospho-L-seryl-[protein] + ADP + H(+). The enzyme catalyses L-threonyl-[protein] + ATP = O-phospho-L-threonyl-[protein] + ADP + H(+). Its function is as follows. Component of a MAP kinase pathway that functions presynaptically to regulate synaptic architecture and presynaptic differentiation. Phosphorylates and activates mkk-4. The protein is Mitogen-activated protein kinase kinase kinase dlk-1 of Caenorhabditis briggsae.